Consider the following 854-residue polypeptide: Envelope glycoprotein gp150 (854 aa).

Topologically, residues 1–783 are extracellular; it reads MAEGFAANRQ…WIGKIPQYLK (783 aa). N220, N258, N269, N274, N298, N330, N336, N342, N418, N422, N448, N469, N481, N499, N518, N531, N548, and N551 each carry an N-linked (GlcNAc...) asparagine; by host glycan. Residues 614-634 form a fusion peptide region; that stretch reads IMLALATVLSIAGAGTGATAI. The stretch at 641–691 forms a coiled coil; the sequence is QQVLATHQEALDKITEALKINNLRLVTLEHQMLVIGLKVEAIEKFLYTAFA. The interval 660–678 is immunosuppression; sequence INNLRLVTLEHQMLVIGLK. Residues N715, N719, N727, and N735 are each glycosylated (N-linked (GlcNAc...) asparagine; by host). Positions 734-770 form a coiled coil; the sequence is YNQTKYLQQKFYEIIMDIEQNNVQGKQGLQKLQNWQD. A helical membrane pass occupies residues 784 to 804; sequence GLLGGILGIGLGILLLILCLP. Topologically, residues 805 to 854 are cytoplasmic; that stretch reads TLVDCIRNCISKVLGYTVIAMPEIDDEEETVQMELRKNGRQCGMSEKEEE.

In terms of assembly, the mature envelope protein (Env) consists of a trimer of SU-TM heterodimers attached by non-covalent interactions or by a labile interchain disulfide bond. In terms of processing, specific enzymatic cleavages in vivo yield mature proteins. Envelope glycoproteins are synthesized as an inactive precursor that is N-glycosylated and processed likely by host cell furin or by a furin-like protease in the Golgi to yield the mature SU and TM proteins. The cleavage site between SU and TM requires the minimal sequence [KR]-X-[KR]-R.

Its subcellular location is the virion membrane. It is found in the host cell membrane. The surface protein (SU) attaches the virus to the host cell by binding to its receptor. This interaction triggers the refolding of the transmembrane protein (TM) and is thought to activate its fusogenic potential by unmasking its fusion peptide. Fusion occurs at the host cell plasma membrane. In terms of biological role, the transmembrane protein (TM) acts as a class I viral fusion protein. Under the current model, the protein has at least 3 conformational states: pre-fusion native state, pre-hairpin intermediate state, and post-fusion hairpin state. During viral and target cell membrane fusion, the coiled coil regions (heptad repeats) assume a trimer-of-hairpins structure, positioning the fusion peptide in close proximity to the C-terminal region of the ectodomain. The formation of this structure appears to drive apposition and subsequent fusion of viral and target cell membranes. Membranes fusion leads to delivery of the nucleocapsid into the cytoplasm. This chain is Envelope glycoprotein gp150 (env), found in Feline immunodeficiency virus (strain San Diego) (FIV).